Reading from the N-terminus, the 343-residue chain is DNA-directed RNA polymerase subunit alpha (343 aa).

An alpha N-terminal domain (alpha-NTD) region spans residues 1–239; the sequence is MGETVTIQKN…DQLNVFVNFE (239 aa). An alpha C-terminal domain (alpha-CTD) region spans residues 255 to 343; it reads FNPAFLKKVD…ELAKRFEDHY (89 aa).

It belongs to the RNA polymerase alpha chain family. As to quaternary structure, homodimer. The RNAP catalytic core consists of 2 alpha, 1 beta, 1 beta' and 1 omega subunit. When a sigma factor is associated with the core the holoenzyme is formed, which can initiate transcription.

It catalyses the reaction RNA(n) + a ribonucleoside 5'-triphosphate = RNA(n+1) + diphosphate. DNA-dependent RNA polymerase catalyzes the transcription of DNA into RNA using the four ribonucleoside triphosphates as substrates. This is DNA-directed RNA polymerase subunit alpha from Bradyrhizobium diazoefficiens (strain JCM 10833 / BCRC 13528 / IAM 13628 / NBRC 14792 / USDA 110).